The primary structure comprises 380 residues: tRNA-specific 2-thiouridylase MnmA (380 aa).

ATP is bound by residues alanine 25–serine 32 and methionine 51. Cysteine 119 (nucleophile) is an active-site residue. The cysteines at positions 119 and 216 are disulfide-linked. ATP is bound at residue glycine 143. An interaction with tRNA region spans residues lysine 166–glutamine 168. Catalysis depends on cysteine 216, which acts as the Cysteine persulfide intermediate. Residues arginine 320–tyrosine 321 are interaction with tRNA.

This sequence belongs to the MnmA/TRMU family.

Its subcellular location is the cytoplasm. The catalysed reaction is S-sulfanyl-L-cysteinyl-[protein] + uridine(34) in tRNA + AH2 + ATP = 2-thiouridine(34) in tRNA + L-cysteinyl-[protein] + A + AMP + diphosphate + H(+). Functionally, catalyzes the 2-thiolation of uridine at the wobble position (U34) of tRNA, leading to the formation of s(2)U34. The protein is tRNA-specific 2-thiouridylase MnmA of Deinococcus radiodurans (strain ATCC 13939 / DSM 20539 / JCM 16871 / CCUG 27074 / LMG 4051 / NBRC 15346 / NCIMB 9279 / VKM B-1422 / R1).